Consider the following 310-residue polypeptide: 4-hydroxythreonine-4-phosphate dehydrogenase (310 aa).

Residue threonine 129 coordinates substrate. Positions 158, 202, and 250 each coordinate a divalent metal cation. Residues lysine 258, asparagine 267, and arginine 276 each contribute to the substrate site.

The protein belongs to the PdxA family. In terms of assembly, homodimer. Requires a divalent metal cation as cofactor.

The protein localises to the cytoplasm. The enzyme catalyses 4-(phosphooxy)-L-threonine + NAD(+) = 3-amino-2-oxopropyl phosphate + CO2 + NADH. Its pathway is cofactor biosynthesis; pyridoxine 5'-phosphate biosynthesis; pyridoxine 5'-phosphate from D-erythrose 4-phosphate: step 4/5. In terms of biological role, catalyzes the NAD(P)-dependent oxidation of 4-(phosphooxy)-L-threonine (HTP) into 2-amino-3-oxo-4-(phosphooxy)butyric acid which spontaneously decarboxylates to form 3-amino-2-oxopropyl phosphate (AHAP). The protein is 4-hydroxythreonine-4-phosphate dehydrogenase of Hydrogenobaculum sp. (strain Y04AAS1).